Here is a 269-residue protein sequence, read N- to C-terminus: Thiazole synthase (269 aa).

Residue K105 is the Schiff-base intermediate with DXP of the active site. 1-deoxy-D-xylulose 5-phosphate is bound by residues G166, 192–193 (AG), and 214–215 (NT). The segment at 245 to 269 (AMSAQDAAQPSTPVLGTPFWHHDHG) is disordered.

The protein belongs to the ThiG family. Homotetramer. Forms heterodimers with either ThiH or ThiS.

The protein localises to the cytoplasm. The catalysed reaction is [ThiS sulfur-carrier protein]-C-terminal-Gly-aminoethanethioate + 2-iminoacetate + 1-deoxy-D-xylulose 5-phosphate = [ThiS sulfur-carrier protein]-C-terminal Gly-Gly + 2-[(2R,5Z)-2-carboxy-4-methylthiazol-5(2H)-ylidene]ethyl phosphate + 2 H2O + H(+). Its pathway is cofactor biosynthesis; thiamine diphosphate biosynthesis. Catalyzes the rearrangement of 1-deoxy-D-xylulose 5-phosphate (DXP) to produce the thiazole phosphate moiety of thiamine. Sulfur is provided by the thiocarboxylate moiety of the carrier protein ThiS. In vitro, sulfur can be provided by H(2)S. In Paracidovorax citrulli (strain AAC00-1) (Acidovorax citrulli), this protein is Thiazole synthase.